The chain runs to 394 residues: Elongation factor Tu 1 (394 aa).

Positions 10 to 204 (KPHVNVGTIG…ALDSYIPEPE (195 aa)) constitute a tr-type G domain. The interval 19–26 (GHVDHGKT) is G1. 19 to 26 (GHVDHGKT) is a binding site for GTP. Residue threonine 26 participates in Mg(2+) binding. The interval 60 to 64 (GITIN) is G2. Residues 81 to 84 (DCPG) form a G3 region. Residues 81 to 85 (DCPGH) and 136 to 139 (NKCD) each bind GTP. Residues 136 to 139 (NKCD) are G4. Residues 174 to 176 (SAL) form a G5 region.

Belongs to the TRAFAC class translation factor GTPase superfamily. Classic translation factor GTPase family. EF-Tu/EF-1A subfamily. Monomer.

The protein resides in the cytoplasm. It catalyses the reaction GTP + H2O = GDP + phosphate + H(+). In terms of biological role, GTP hydrolase that promotes the GTP-dependent binding of aminoacyl-tRNA to the A-site of ribosomes during protein biosynthesis. The sequence is that of Elongation factor Tu 1 from Shewanella sp. (strain MR-4).